The primary structure comprises 303 residues: Eukaryotic translation initiation factor 3 subunit G (303 aa).

Disordered stretches follow at residues 1-32 (MAAV…QTIV), 81-100 (GLSA…VGEN), 105-126 (PSAN…NAMK), and 181-215 (GAAG…AGGK). A compositionally biased stretch (basic and acidic residues) spans 109–126 (WRKDQKDESKDANANAMK). Residues 223–301 (ATLRVTNVSE…LILRVEFAKK (79 aa)) enclose the RRM domain.

This sequence belongs to the eIF-3 subunit G family. In terms of assembly, component of the eukaryotic translation initiation factor 3 (eIF-3) complex.

It is found in the cytoplasm. In terms of biological role, RNA-binding component of the eukaryotic translation initiation factor 3 (eIF-3) complex, which is involved in protein synthesis of a specialized repertoire of mRNAs and, together with other initiation factors, stimulates binding of mRNA and methionyl-tRNAi to the 40S ribosome. The eIF-3 complex specifically targets and initiates translation of a subset of mRNAs involved in cell proliferation. This subunit can bind 18S rRNA. This is Eukaryotic translation initiation factor 3 subunit G from Pyricularia oryzae (strain 70-15 / ATCC MYA-4617 / FGSC 8958) (Rice blast fungus).